Consider the following 386-residue polypeptide: Threonine--tRNA ligase editing subunit (386 aa).

The protein belongs to the class-II aminoacyl-tRNA synthetase family. Archaea-specific ThrRS editing domain subfamily. As to quaternary structure, probably interacts with its catalytic subunit (AC Q97VW8); a subunit fusion (in the order edit-catalytic) is fully functional.

The protein localises to the cytoplasm. Its function is as follows. Freestanding tRNA editing subunit of threonine--tRNA ligase, the catalytic subunit is AC Q97VW8. Deacylates (edits) mischarged L-seryl-tRNA(Thr) in trans, removing L-serine, has no aminoacylation activity. In vitro when both subunits are present, or if the 2 subunits are fused, L-seryl-tRNA(Thr) is no longer produced. Has no activity on correctly acylated L-seryl-tRNA(Ser) or L-threonyl-tRNA(Thr). Editing is probably catalyzed by the 2'-OH of A76 of tRNA(Thr). This chain is Threonine--tRNA ligase editing subunit, found in Saccharolobus solfataricus (strain ATCC 35092 / DSM 1617 / JCM 11322 / P2) (Sulfolobus solfataricus).